The following is a 149-amino-acid chain: SsrA-binding protein (149 aa).

The protein belongs to the SmpB family.

Its subcellular location is the cytoplasm. In terms of biological role, required for rescue of stalled ribosomes mediated by trans-translation. Binds to transfer-messenger RNA (tmRNA), required for stable association of tmRNA with ribosomes. tmRNA and SmpB together mimic tRNA shape, replacing the anticodon stem-loop with SmpB. tmRNA is encoded by the ssrA gene; the 2 termini fold to resemble tRNA(Ala) and it encodes a 'tag peptide', a short internal open reading frame. During trans-translation Ala-aminoacylated tmRNA acts like a tRNA, entering the A-site of stalled ribosomes, displacing the stalled mRNA. The ribosome then switches to translate the ORF on the tmRNA; the nascent peptide is terminated with the 'tag peptide' encoded by the tmRNA and targeted for degradation. The ribosome is freed to recommence translation, which seems to be the essential function of trans-translation. The chain is SsrA-binding protein from Anaplasma marginale (strain Florida).